The sequence spans 702 residues: Ribosomal RNA large subunit methyltransferase K/L (702 aa).

The THUMP domain occupies 43–154; that stretch reads LIYQSLMWSR…KETASIALDL (112 aa).

This sequence belongs to the methyltransferase superfamily. RlmKL family.

It localises to the cytoplasm. It carries out the reaction guanosine(2445) in 23S rRNA + S-adenosyl-L-methionine = N(2)-methylguanosine(2445) in 23S rRNA + S-adenosyl-L-homocysteine + H(+). The enzyme catalyses guanosine(2069) in 23S rRNA + S-adenosyl-L-methionine = N(2)-methylguanosine(2069) in 23S rRNA + S-adenosyl-L-homocysteine + H(+). Specifically methylates the guanine in position 2445 (m2G2445) and the guanine in position 2069 (m7G2069) of 23S rRNA. This is Ribosomal RNA large subunit methyltransferase K/L from Salmonella gallinarum (strain 287/91 / NCTC 13346).